The chain runs to 211 residues: Large ribosomal subunit protein uL4 (211 aa).

A disordered region spans residues 63–94 (RFGRQKGGGTARHGARSAPQFVGGGKAHGPRV).

It belongs to the universal ribosomal protein uL4 family. As to quaternary structure, part of the 50S ribosomal subunit.

Functionally, one of the primary rRNA binding proteins, this protein initially binds near the 5'-end of the 23S rRNA. It is important during the early stages of 50S assembly. It makes multiple contacts with different domains of the 23S rRNA in the assembled 50S subunit and ribosome. Its function is as follows. Forms part of the polypeptide exit tunnel. This chain is Large ribosomal subunit protein uL4, found in Maricaulis maris (strain MCS10) (Caulobacter maris).